We begin with the raw amino-acid sequence, 307 residues long: N-acetylmuramic acid 6-phosphate etherase (307 aa).

Residues 62 to 225 (VVDAFRVGGR…TTASMIRIGK (164 aa)) form the SIS domain. The Proton donor role is filled by E90. E121 is a catalytic residue.

It belongs to the GCKR-like family. MurNAc-6-P etherase subfamily. In terms of assembly, homodimer.

The enzyme catalyses N-acetyl-D-muramate 6-phosphate + H2O = N-acetyl-D-glucosamine 6-phosphate + (R)-lactate. Its pathway is amino-sugar metabolism; 1,6-anhydro-N-acetylmuramate degradation. It participates in amino-sugar metabolism; N-acetylmuramate degradation. The protein operates within cell wall biogenesis; peptidoglycan recycling. Functionally, specifically catalyzes the cleavage of the D-lactyl ether substituent of MurNAc 6-phosphate, producing GlcNAc 6-phosphate and D-lactate. Together with AnmK, is also required for the utilization of anhydro-N-acetylmuramic acid (anhMurNAc) either imported from the medium or derived from its own cell wall murein, and thus plays a role in cell wall recycling. The chain is N-acetylmuramic acid 6-phosphate etherase from Brucella anthropi (strain ATCC 49188 / DSM 6882 / CCUG 24695 / JCM 21032 / LMG 3331 / NBRC 15819 / NCTC 12168 / Alc 37) (Ochrobactrum anthropi).